The following is a 50-amino-acid chain: Insulin 2 (50 aa).

Intrachain disulfides connect Cys-8–Cys-36, Cys-20–Cys-49, and Cys-35–Cys-40.

It belongs to the insulin family. As to quaternary structure, heterodimer of a B chain and an A chain linked by two disulfide bonds.

It is found in the secreted. In terms of biological role, insulin decreases blood glucose concentration. It increases cell permeability to monosaccharides, amino acids and fatty acids. It accelerates glycolysis, the pentose phosphate cycle, and glycogen synthesis in liver. This is Insulin 2 (ins2) from Batrachoididae sp. (Toadfish).